The chain runs to 255 residues: 5'-nucleotidase SurE (255 aa).

Asp8, Asp9, Ser39, and Asn95 together coordinate a divalent metal cation.

This sequence belongs to the SurE nucleotidase family. The cofactor is a divalent metal cation.

It localises to the cytoplasm. The catalysed reaction is a ribonucleoside 5'-phosphate + H2O = a ribonucleoside + phosphate. In terms of biological role, nucleotidase that shows phosphatase activity on nucleoside 5'-monophosphates. This is 5'-nucleotidase SurE from Thermosipho africanus (strain TCF52B).